A 280-amino-acid polypeptide reads, in one-letter code: Putative pyruvate, phosphate dikinase regulatory protein (280 aa).

Position 154 to 161 (154 to 161) interacts with ADP; it reads GVSRTSKT.

Belongs to the pyruvate, phosphate/water dikinase regulatory protein family. PDRP subfamily.

It carries out the reaction N(tele)-phospho-L-histidyl/L-threonyl-[pyruvate, phosphate dikinase] + ADP = N(tele)-phospho-L-histidyl/O-phospho-L-threonyl-[pyruvate, phosphate dikinase] + AMP + H(+). The catalysed reaction is N(tele)-phospho-L-histidyl/O-phospho-L-threonyl-[pyruvate, phosphate dikinase] + phosphate + H(+) = N(tele)-phospho-L-histidyl/L-threonyl-[pyruvate, phosphate dikinase] + diphosphate. Bifunctional serine/threonine kinase and phosphorylase involved in the regulation of the pyruvate, phosphate dikinase (PPDK) by catalyzing its phosphorylation/dephosphorylation. The polypeptide is Putative pyruvate, phosphate dikinase regulatory protein (Nitrobacter winogradskyi (strain ATCC 25391 / DSM 10237 / CIP 104748 / NCIMB 11846 / Nb-255)).